We begin with the raw amino-acid sequence, 711 residues long: Receptor-like protein 43 (711 aa).

Residues 1 to 30 (MKGFWNSKSTIRITLSFIFLFISQFSDVLA) form the signal peptide. At 31–666 (APTRHLCRPE…EDEEVISWIA (636 aa)) the chain is on the extracellular side. Asn-78, Asn-114, Asn-143, Asn-167, and Asn-191 each carry an N-linked (GlcNAc...) asparagine glycan. LRR repeat units follow at residues 120–143 (LHFLTTLDLSFNDFKGQIMSSIEN), 144–168 (LSHLTYLDLSFNHFSGQVPSSIGNL), 170–192 (HLTFLDLYCNQFSGQVPSSIGNL), 193–216 (SHLTTLELSFNRFFGQFPSSIGGL), 218–240 (HLTTLNLFVNNFLGQIPSSIGNL), 241–266 (SNLTSLYLCKNNFSGQIPSFIGNLSQ), 268–288 (TRLDLSSNNFFGEIPGWLWTL), and 289–316 (PNLFYVNLSYNTFIGFQRPNKPEPSMGH). N-linked (GlcNAc...) asparagine glycans are attached at residues Asn-239, Asn-242, Asn-252, and Asn-263. 5 N-linked (GlcNAc...) asparagine glycosylation sites follow: Asn-295, Asn-323, Asn-347, Asn-362, and Asn-372. Residues 317–334 (LLGSNNNFTGKIPSFICE) form an LRR 9; degenerate repeat. LRR repeat units lie at residues 335–358 (LRSLETLDLSDNNFSGLIPRCMGN), 360–384 (KSNLSHLNLRQNNLSGGLPKHIFEI), 386–406 (RSLDVGHNQLVGKLPRSLRFF), 407–430 (STLEVLNVESNRINDTFPFWLTSL), 431–452 (PKLQVLVLRSNAFHGPIHEASF), 453–476 (LKLRIIDISHNHFNGTLPSDYFVK), 519–543 (LTIYTALDFSGNKFEGEIPKSIGLL), 544–567 (KELLVLNLSNNAFTGHIPSSMGKL), 568–591 (TALESLDVSQNKLYGEIPQEIGNL), and 593–616 (FLSCMNFSHNQLAGLVPGGQQFLT). N-linked (GlcNAc...) asparagine glycosylation occurs at Asn-420. N-linked (GlcNAc...) asparagine glycosylation occurs at Asn-466. N-linked (GlcNAc...) asparagine glycosylation is found at Asn-550, Asn-590, and Asn-598. Residues 667-687 (AAIGFIPGIVLGLTIGYILVF) traverse the membrane as a helical segment. The Cytoplasmic portion of the chain corresponds to 688–711 (YKPEWFIKTFGRNNCRRRSTTTTH).

Belongs to the RLP family.

The protein localises to the cell membrane. This chain is Receptor-like protein 43, found in Arabidopsis thaliana (Mouse-ear cress).